The sequence spans 113 residues: Non-specific lipid-transfer protein (113 aa).

The N-terminal stretch at 1 to 24 (AQVMLMAVALVLMLAAVPRAAVAI) is a signal peptide. 4 disulfide bridges follow: Cys-26–Cys-73, Cys-36–Cys-50, Cys-51–Cys-96, and Cys-71–Cys-110. Asp-30 carries Cis-14-hydroxy-10,13-dioxo-7-heptadecenoic acid aspartate ester lipidation.

It belongs to the plant LTP family.

Its function is as follows. Plant non-specific lipid-transfer proteins transfer phospholipids as well as galactolipids across membranes. May play a role in wax or cutin deposition in the cell walls of expanding epidermal cells and certain secretory tissues. The polypeptide is Non-specific lipid-transfer protein (Triticum aestivum (Wheat)).